A 301-amino-acid polypeptide reads, in one-letter code: Probable aspartoacylase (301 aa).

Histidine 13 and glutamate 16 together coordinate Zn(2+). Substrate-binding positions include arginine 54 and 61-62 (NR). Histidine 105 contributes to the Zn(2+) binding site. Positions 163 and 273 each coordinate substrate.

This sequence belongs to the AspA/AstE family. Aspartoacylase subfamily. The cofactor is Zn(2+).

The catalysed reaction is an N-acyl-L-aspartate + H2O = a carboxylate + L-aspartate. This is Probable aspartoacylase from Prochlorococcus marinus (strain MIT 9312).